Consider the following 307-residue polypeptide: Hepatitis A virus cellular receptor 1 homolog (307 aa).

A signal peptide spans 1-21 (MVQLQVFISGLLLLLPGSVDS). One can recognise an Ig-like V-type domain in the interval 22-124 (YEVVKGVVGH…WFNDQKMTFS (103 aa)). The Extracellular portion of the chain corresponds to 22–235 (YEVVKGVVGH…RKPQRNPTKG (214 aa)). Cystine bridges form between Cys37–Cys108, Cys49–Cys60, and Cys55–Cys107. Positions 129-177 (PEIPTSPPTRPTTTRPTTTRPTTISTRSTHVPTSTRVSTSTPTPEQTQT) are disordered. The segment covering 139–175 (PTTTRPTTTRPTTISTRSTHVPTSTRVSTSTPTPEQT) has biased composition (low complexity). N-linked (GlcNAc...) asparagine glycosylation occurs at Asn206. The chain crosses the membrane as a helical span at residues 236-256 (FYVGMSVAALLLLLLASTVVV). At 257 to 307 (TRYIIIRKKMGSLSFVAFHVSKSRALQNAAIVHPRAEDNIYIIEDRSRGAE) the chain is on the cytoplasmic side.

Belongs to the immunoglobulin superfamily. TIM family. In terms of assembly, interacts with STAM. Interacts with SELPLG. As to expression, expressed at a low level in normal kidney but are increased dramatically in postischemic kidney. Expressed in proliferating bromodeoxyuridine-positive and dedifferentiated vimentin-positive epithelial cells in regenerating proximal tubules.

It is found in the cell membrane. Phosphatidylserine receptor that plays an important functional role in regulatory B-cells homeostasis including generation, expansion and suppressor functions. As P-selectin/SELPLG ligand, plays a specialized role in activated but not naive T-cell trafficking during inflammatory responses. Controls thereby T-cell accumulation in the inflamed central nervous system (CNS) and the induction of autoimmune disease. Also regulates expression of various anti-inflammatory cytokines and co-inhibitory ligands including IL10. Acts as a regulator of T-cell proliferation. May play a role in kidney injury and repair. In Rattus norvegicus (Rat), this protein is Hepatitis A virus cellular receptor 1 homolog (Havcr1).